A 232-amino-acid chain; its full sequence is 6-phosphogluconolactonase (232 aa).

The protein belongs to the glucosamine/galactosamine-6-phosphate isomerase family. 6-phosphogluconolactonase subfamily.

It catalyses the reaction 6-phospho-D-glucono-1,5-lactone + H2O = 6-phospho-D-gluconate + H(+). The protein operates within carbohydrate degradation; pentose phosphate pathway; D-ribulose 5-phosphate from D-glucose 6-phosphate (oxidative stage): step 2/3. Its function is as follows. Hydrolysis of 6-phosphogluconolactone to 6-phosphogluconate. This chain is 6-phosphogluconolactonase (pgl), found in Rhizobium meliloti (strain 1021) (Ensifer meliloti).